The primary structure comprises 326 residues: GTP 3',8-cyclase (326 aa).

Positions S6–E220 constitute a Radical SAM core domain. R15 lines the GTP pocket. 2 residues coordinate [4Fe-4S] cluster: C22 and C26. Residue Y28 participates in S-adenosyl-L-methionine binding. C29 contributes to the [4Fe-4S] cluster binding site. R65 lines the GTP pocket. Position 69 (G69) interacts with S-adenosyl-L-methionine. Residue T96 participates in GTP binding. S120 serves as a coordination point for S-adenosyl-L-methionine. K157 lines the GTP pocket. M191 is a binding site for S-adenosyl-L-methionine. The [4Fe-4S] cluster site is built by C254 and C257. R259 to R261 contributes to the GTP binding site. C271 is a binding site for [4Fe-4S] cluster.

Belongs to the radical SAM superfamily. MoaA family. As to quaternary structure, monomer and homodimer. [4Fe-4S] cluster serves as cofactor.

The catalysed reaction is GTP + AH2 + S-adenosyl-L-methionine = (8S)-3',8-cyclo-7,8-dihydroguanosine 5'-triphosphate + 5'-deoxyadenosine + L-methionine + A + H(+). Its pathway is cofactor biosynthesis; molybdopterin biosynthesis. In terms of biological role, catalyzes the cyclization of GTP to (8S)-3',8-cyclo-7,8-dihydroguanosine 5'-triphosphate. This chain is GTP 3',8-cyclase, found in Geobacter sulfurreducens (strain ATCC 51573 / DSM 12127 / PCA).